Consider the following 92-residue polypeptide: Small ribosomal subunit protein uS19 (92 aa).

It belongs to the universal ribosomal protein uS19 family.

Functionally, protein S19 forms a complex with S13 that binds strongly to the 16S ribosomal RNA. This Lactococcus lactis subsp. cremoris (strain MG1363) protein is Small ribosomal subunit protein uS19.